Here is a 1363-residue protein sequence, read N- to C-terminus: Neurexin-1 (1363 aa).

The Extracellular segment spans residues 1–1287 (SKRRDMTVFS…EVIRESSSTT (1287 aa)). N-linked (GlcNAc...) asparagine glycosylation occurs at N49. Positions 67 to 105 (QSRLCAREDVCLNGGVCSVLNDQAVCDCSQTGFRGKDCS) constitute an EGF-like 1 domain. Disulfide bonds link C71/C83, C77/C92, and C94/C104. 2 consecutive Laminin G-like domains span residues 132–329 (IATF…AFKC) and 336–528 (DPIT…KPSC). 3 residues coordinate Ca(2+): D178, L195, and M263. 5 cysteine pairs are disulfide-bonded: C293/C329, C499/C528, C536/C547, C541/C556, and C558/C568. The 38-residue stretch at 532–569 (TAKPCLSNPCKNNGVCRDGWNRYVCDCSGTGYLGRSCE) folds into the EGF-like 2 domain. Laminin G-like domains are found at residues 574–747 (ILSY…IDYC) and 761–936 (DPVT…ERGC). An N-linked (GlcNAc...) asparagine glycan is attached at N646. Intrachain disulfides connect C908/C936, C943/C954, C948/C963, and C965/C975. The EGF-like 3 domain maps to 939–976 (PSTTCQEDSCANQGVCLQQWDGFSCDCSMTSFSGPLCN). Residues 982-1180 (YIFSKGGGQI…DANIVIEGNV (199 aa)) form the Laminin G-like 5 domain. Residue N1079 is glycosylated (N-linked (GlcNAc...) asparagine). Positions 1244-1280 (CPSDDEDIDPCEPSSGGLANPTRAGGGREYPGSSEVI) are disordered. The chain crosses the membrane as a helical span at residues 1288 to 1308 (GMVVGIVAAAALCILILLYAM). Over 1309 to 1363 (YKYRNRDEGSYHVDESRNYISNSAQSNGAVIKEKQPNSAKSSNKNKKNKDKEYYV) the chain is Cytoplasmic. The interval 1330–1363 (NSAQSNGAVIKEKQPNSAKSSNKNKKNKDKEYYV) is disordered.

This sequence belongs to the neurexin family. The cytoplasmic C-terminal region binds to CASK. The laminin G-like domain 1 binds to NXPH1. Specific isoforms bind to alpha-dystroglycan and to alpha-latrotoxin. Post-translationally, N- and O-glycosylated.

Its subcellular location is the membrane. Neuronal cell surface protein that may be involved in cell recognition and cell adhesion. May mediate intracellular signaling. The sequence is that of Neurexin-1 (NRXN1) from Gallus gallus (Chicken).